We begin with the raw amino-acid sequence, 239 residues long: 1-(5-phosphoribosyl)-5-[(5-phosphoribosylamino)methylideneamino] imidazole-4-carboxamide isomerase (239 aa).

Asp8 (proton acceptor) is an active-site residue. Residue Asp129 is the Proton donor of the active site.

It belongs to the HisA/HisF family.

The protein resides in the cytoplasm. It catalyses the reaction 1-(5-phospho-beta-D-ribosyl)-5-[(5-phospho-beta-D-ribosylamino)methylideneamino]imidazole-4-carboxamide = 5-[(5-phospho-1-deoxy-D-ribulos-1-ylimino)methylamino]-1-(5-phospho-beta-D-ribosyl)imidazole-4-carboxamide. Its pathway is amino-acid biosynthesis; L-histidine biosynthesis; L-histidine from 5-phospho-alpha-D-ribose 1-diphosphate: step 4/9. The protein is 1-(5-phosphoribosyl)-5-[(5-phosphoribosylamino)methylideneamino] imidazole-4-carboxamide isomerase of Bacillus cytotoxicus (strain DSM 22905 / CIP 110041 / 391-98 / NVH 391-98).